Here is a 66-residue protein sequence, read N- to C-terminus: Heat-stable enterotoxin (66 aa).

Positions 1–19 (MKKIVFVLVLMLSSFGTFG) are cleaved as a signal peptide. The propeptide occupies 20-50 (QETASRQFGDAFSTPIAAEVNKKACDTELPP). 3 disulfide bridges follow: cysteine 54-cysteine 59, cysteine 55-cysteine 63, and cysteine 58-cysteine 66.

Belongs to the heat-stable enterotoxin family.

The protein resides in the secreted. Functionally, toxin which activates the particulate form of guanylate cyclase and increases cyclic GMP levels within the host intestinal epithelial cells. This is Heat-stable enterotoxin (yst) from Yersinia kristensenii.